Here is an 835-residue protein sequence, read N- to C-terminus: Outer membrane usher protein FasD (835 aa).

The signal sequence occupies residues 1–21 (MNKYPPLLTMLIIGIGSNAVA). A disulfide bridge connects residues Cys810 and Cys834.

This sequence belongs to the fimbrial export usher family.

Its subcellular location is the cell outer membrane. Involved in the export and assembly of the 987P fimbriae subunits across the outer membrane. In Escherichia coli, this protein is Outer membrane usher protein FasD (fasD).